A 347-amino-acid polypeptide reads, in one-letter code: Putative histone PARylation factor 1-like (347 aa).

Met-1 carries the N-acetylmethionine modification. An N6-acetyllysine mark is found at Lys-187 and Lys-234.

This sequence belongs to the HPF1 family.

This chain is Putative histone PARylation factor 1-like, found in Homo sapiens (Human).